A 250-amino-acid polypeptide reads, in one-letter code: Ubiquinone/menaquinone biosynthesis C-methyltransferase UbiE (250 aa).

Residues S73, D94, and 122–123 each bind S-adenosyl-L-methionine; that span reads NA.

It belongs to the class I-like SAM-binding methyltransferase superfamily. MenG/UbiE family.

It carries out the reaction a 2-demethylmenaquinol + S-adenosyl-L-methionine = a menaquinol + S-adenosyl-L-homocysteine + H(+). The catalysed reaction is a 2-methoxy-6-(all-trans-polyprenyl)benzene-1,4-diol + S-adenosyl-L-methionine = a 5-methoxy-2-methyl-3-(all-trans-polyprenyl)benzene-1,4-diol + S-adenosyl-L-homocysteine + H(+). Its pathway is quinol/quinone metabolism; menaquinone biosynthesis; menaquinol from 1,4-dihydroxy-2-naphthoate: step 2/2. The protein operates within cofactor biosynthesis; ubiquinone biosynthesis. Methyltransferase required for the conversion of demethylmenaquinol (DMKH2) to menaquinol (MKH2) and the conversion of 2-polyprenyl-6-methoxy-1,4-benzoquinol (DDMQH2) to 2-polyprenyl-3-methyl-6-methoxy-1,4-benzoquinol (DMQH2). In Legionella pneumophila (strain Corby), this protein is Ubiquinone/menaquinone biosynthesis C-methyltransferase UbiE.